We begin with the raw amino-acid sequence, 859 residues long: Heterogeneous nuclear ribonucleoprotein U-like protein 1 (859 aa).

Positions 1 to 103 are necessary for interaction with HRMT1L1; it reads MDVRRLKVNE…GPDGHYVMDN (103 aa). One can recognise an SAP domain in the interval 3 to 37; that stretch reads VRRLKVNELREELQRRGLDTRGLKAELAERLLAAL. Positions 36 to 131 are disordered; sequence ALEAEEPEDE…SSYDRRPLDM (96 aa). Residues 38-54 show a composition bias toward acidic residues; sequence EAEEPEDERELEADDDP. A compositionally biased stretch (pro residues) spans 77 to 88; sequence QPPPPGLQPHPE. K117 is covalently cross-linked (Glycyl lysine isopeptide (Lys-Gly) (interchain with G-Cter in SUMO1); alternate). K117 participates in a covalent cross-link: Glycyl lysine isopeptide (Lys-Gly) (interchain with G-Cter in SUMO2); alternate. Residues 118–130 show a composition bias toward basic and acidic residues; sequence QENESSYDRRPLD. Residue K143 forms a Glycyl lysine isopeptide (Lys-Gly) (interchain with G-Cter in SUMO1); alternate linkage. K143 is covalently cross-linked (Glycyl lysine isopeptide (Lys-Gly) (interchain with G-Cter in SUMO2); alternate). Positions 146–206 are disordered; that stretch reads MKQEAPPSFL…QPPAEEDEDD (61 aa). Glycyl lysine isopeptide (Lys-Gly) (interchain with G-Cter in SUMO2) cross-links involve residues K147 and K163. Positions 174–193 are enriched in basic and acidic residues; sequence RPFEENRGRGYFEHREDRRG. The B30.2/SPRY domain maps to 192 to 389; that stretch reads RGRSPQPPAE…VEFNFGQRAE (198 aa). Residue S195 is modified to Phosphoserine. A Phosphothreonine modification is found at T210. Positions 214–859 are necessary for interaction with TP53; the sequence is IDTYNCDLHF…GSTQGGTSTQ (646 aa). Residues K271 and K450 each participate in a glycyl lysine isopeptide (Lys-Gly) (interchain with G-Cter in SUMO2) cross-link. The tract at residues 457-595 is necessary for interaction with BRD7 and transcriptional activation; the sequence is NAIMDKMRVM…EEADKLVRQY (139 aa). Position 513 is a phosphoserine (S513). K540 is covalently cross-linked (Glycyl lysine isopeptide (Lys-Gly) (interchain with G-Cter in SUMO2)). A compositionally biased stretch (basic and acidic residues) spans 595 to 612; that stretch reads YNEEGRKAGPPPEKRFDS. The tract at residues 595-814 is disordered; the sequence is YNEEGRKAGP…PPTAQTYPQP (220 aa). 5 consecutive repeat copies span residues 613–615, 620–622, 639–641, 645–647, and 659–661. 2 stretches are compositionally biased toward gly residues: residues 613–626 and 634–670; these read RGGGFRGRGGGGGF and PPGGNRGGFQNRGGGGGSGGGGGNYRGGFNRSGGGGY. A 5 X 3 AA repeats of R-G-G region spans residues 613 to 661; it reads RGGGFRGRGGGGGFQRYDNRGPPGGNRGGFQNRGGGGGSGGGGGNYRGG. The tract at residues 613–661 is necessary for transcription repression; the sequence is RGGGFRGRGGGGGFQRYDNRGPPGGNRGGFQNRGGGGGSGGGGGNYRGG. R639 is subject to Asymmetric dimethylarginine. R645 and R659 each carry asymmetric dimethylarginine; alternate. Omega-N-methylarginine; alternate occurs at positions 645 and 659. Omega-N-methylarginine occurs at positions 664 and 674. The segment covering 671–696 has biased composition (low complexity); it reads NQNRWGNNNRDNNNSNNRGNYNRAPQ. Positions 697 to 720 are enriched in pro residues; the sequence is QQPPPQQPPPPQPPPQQPPPPPSY. S721 bears the Phosphoserine mark. Over residues 728–744 the composition is skewed to polar residues; it reads GASSYNKNSNIPGSSAN. Residues 745-775 are compositionally biased toward low complexity; it reads TSTPTVSSYTPPQPSYSQPPYNQGGYTQGYT. 2 stretches are compositionally biased toward pro residues: residues 776 to 786 and 796 to 807; these read APPPPPPPPPA and NPAPYTPPPPPT.

Interacts with BRD7, PRMT2, TP53 and NXF1. Associates with histones and BRD7. In terms of processing, methylated.

It is found in the nucleus. Acts as a basic transcriptional regulator. Represses basic transcription driven by several virus and cellular promoters. When associated with BRD7, activates transcription of glucocorticoid-responsive promoter in the absence of ligand-stimulation. Also plays a role in mRNA processing and transport. Binds avidly to poly(G) and poly(C) RNA homopolymers in vitro. This is Heterogeneous nuclear ribonucleoprotein U-like protein 1 (Hnrnpul1) from Mus musculus (Mouse).